Consider the following 1151-residue polypeptide: Error-prone DNA polymerase (1151 aa).

The segment at 1108–1151 (HPVPSGDALIEPLNDDRRDHADAPAQKIRHPRNVRILPPSRDFH) is disordered.

The protein belongs to the DNA polymerase type-C family. DnaE2 subfamily.

Its subcellular location is the cytoplasm. The catalysed reaction is DNA(n) + a 2'-deoxyribonucleoside 5'-triphosphate = DNA(n+1) + diphosphate. Its function is as follows. DNA polymerase involved in damage-induced mutagenesis and translesion synthesis (TLS). It is not the major replicative DNA polymerase. In Bradyrhizobium diazoefficiens (strain JCM 10833 / BCRC 13528 / IAM 13628 / NBRC 14792 / USDA 110), this protein is Error-prone DNA polymerase.